The sequence spans 575 residues: Methionine--tRNA ligase, mitochondrial (575 aa).

The short motif at 20 to 32 (PIFYPNAKPHLGH) is the 'HIGH' region element. Residues 341–345 (KMSKS) carry the 'KMSKS' region motif. An ATP-binding site is contributed by K344.

It belongs to the class-I aminoacyl-tRNA synthetase family.

The protein resides in the mitochondrion matrix. It carries out the reaction tRNA(Met) + L-methionine + ATP = L-methionyl-tRNA(Met) + AMP + diphosphate. Its function is as follows. Catalyzes the attachment of methionine to tRNA(Met) in the mitochondrion. This is Methionine--tRNA ligase, mitochondrial (MSM1) from Saccharomyces cerevisiae (strain ATCC 204508 / S288c) (Baker's yeast).